Reading from the N-terminus, the 611-residue chain is Leukotriene A-4 hydrolase (611 aa).

Lysine 73 carries the post-translational modification N6-acetyllysine. Residues 135–137 (QCQ) and 267–272 (SYGGME) each bind a peptide. Histidine 296 is a Zn(2+) binding site. Glutamate 297 serves as the catalytic Proton acceptor. Histidine 300 and glutamate 319 together coordinate Zn(2+). Residue lysine 337 is modified to N6-acetyllysine. Tyrosine 384 functions as the Proton donor in the catalytic mechanism. Lysine 414 is modified (N6-acetyllysine). Serine 416 carries the phosphoserine modification. 564–566 (RMK) contacts a peptide. At lysine 573 the chain carries N6-acetyllysine.

This sequence belongs to the peptidase M1 family. As to quaternary structure, monomer. Zn(2+) serves as cofactor. Phosphorylation at Ser-416 inhibits leukotriene-A4 hydrolase activity. activity.

The protein resides in the cytoplasm. The enzyme catalyses leukotriene A4 + H2O = leukotriene B4. It catalyses the reaction (5S,6S)-epoxy-(18R)-hydroxy-(7E,9E,11Z,14Z,16E)-eicosapentaenoate + H2O = resolvin E1. It carries out the reaction (5S,6S)-epoxy-(18S)-hydroxy-(7E,9E,11Z,14Z,16E)-eicosapentaenoate + H2O = 18S-resolvin E1. The catalysed reaction is Release of the N-terminal residue from a tripeptide.. It functions in the pathway lipid metabolism; leukotriene B4 biosynthesis. Its activity is regulated as follows. Inhibited by bestatin. The epoxide hydrolase activity is restrained by suicide inactivation that involves binding of LTA4 to Tyr-379. 4-(4-benzylphenyl)thiazol-2-amine (ARM1) selectively inhibits the epoxide hydrolase activity. In terms of biological role, bifunctional zinc metalloenzyme that comprises both epoxide hydrolase (EH) and aminopeptidase activities. Acts as an epoxide hydrolase to catalyze the conversion of LTA4 to the pro-inflammatory mediator leukotriene B4 (LTB4). Also has aminopeptidase activity, with high affinity for N-terminal arginines of various synthetic tripeptides. In addition to its pro-inflammatory EH activity, may also counteract inflammation by its aminopeptidase activity, which inactivates by cleavage another neutrophil attractant, the tripeptide Pro-Gly-Pro (PGP), a bioactive fragment of collagen generated by the action of matrix metalloproteinase-9 (MMP9) and prolylendopeptidase (PREPL). Involved also in the biosynthesis of resolvin E1 and 18S-resolvin E1 from eicosapentaenoic acid, two lipid mediators that show potent anti-inflammatory and pro-resolving actions. In Cavia porcellus (Guinea pig), this protein is Leukotriene A-4 hydrolase (LTA4H).